Consider the following 333-residue polypeptide: Antimicrobial peptides (333 aa).

The signal sequence occupies residues 1 to 23 (MVQKGVVFGVLLILFICSTLTSA). Positions 23-52 (ADSKPNPTKEEEPAKKPDEVSVKSGGPEVS) are disordered. A propeptide spans 24–54 (DSKPNPTKEEEPAKKPDEVSVKSGGPEVSED) (acidic peptide 1). Basic and acidic residues predominate over residues 29–43 (PTKEEEPAKKPDEVS). Position 55 is a pyrrolidone carboxylic acid (Gln55). 2 disulfides stabilise this stretch: Cys60–Cys70 and Cys61–Cys74. Residues 75–102 (ANAEEAAAAIPEASEELAQEEAPVYSED) constitute a propeptide, acidic peptide 2. The residue at position 103 (Gln103) is a Pyrrolidone carboxylic acid. Cystine bridges form between Cys108/Cys118 and Cys109/Cys122. A propeptide spans 123–148 (QNAEEAAAAIPEATEKAQEAPVYSED) (acidic peptide 3). Gln149 carries the post-translational modification Pyrrolidone carboxylic acid. 2 disulfides stabilise this stretch: Cys154–Cys164 and Cys155–Cys168. Residues 169-196 (QNAEEAAAAVAIPEASEKAQEGPVYSED) constitute a propeptide, acidic peptide 4. The residue at position 197 (Gln197) is a Pyrrolidone carboxylic acid. 2 cysteine pairs are disulfide-bonded: Cys202/Cys212 and Cys203/Cys216. The propeptide at 217-232 (SNAADEVATPEDVEPG) is acidic peptide 5. A Pyrrolidone carboxylic acid modification is found at Gln233. Cystine bridges form between Cys238–Cys248 and Cys239–Cys252. Residues 253 to 278 (HNAAEEATLKAFEEEAAREQPVYSED) constitute a propeptide, acidic peptide 6. Gln279 is subject to Pyrrolidone carboxylic acid. Disulfide bonds link Cys284–Cys294 and Cys285–Cys298. A propeptide spans 299-333 (QSAEEAAAFQAGEVTASLMLIMFKACPCMGPVPSV) (acidic peptide 7).

In terms of processing, the N-terminal of all peptides are blocked. Post-translationally, the 4 cysteine residues of all peptides are involved in intrachain disulfide bonds.

Its subcellular location is the secreted. Functionally, plays a role in the defense of the germinating seed against microorganisms, by inhibiting the growth of a range of filamentous fungi and bacteria, especially Gram-positive bacteria. Not cytotoxic for cultured human cells and are the smallest known plant-derived antimicrobial peptides. Peptide IB-AMP4 has a higher antifungal activity than IB-AMP1. The polypeptide is Antimicrobial peptides (AMP) (Impatiens balsamina (Balsam)).